The chain runs to 189 residues: NADH-quinone oxidoreductase subunit B (189 aa).

Residues Cys-39, Cys-40, Cys-104, and Cys-135 each coordinate [4Fe-4S] cluster.

This sequence belongs to the complex I 20 kDa subunit family. In terms of assembly, NDH-1 is composed of 14 different subunits. Subunits NuoB, C, D, E, F, and G constitute the peripheral sector of the complex. [4Fe-4S] cluster is required as a cofactor.

The protein localises to the cell inner membrane. It catalyses the reaction a quinone + NADH + 5 H(+)(in) = a quinol + NAD(+) + 4 H(+)(out). Its function is as follows. NDH-1 shuttles electrons from NADH, via FMN and iron-sulfur (Fe-S) centers, to quinones in the respiratory chain. The immediate electron acceptor for the enzyme in this species is believed to be a menaquinone. Couples the redox reaction to proton translocation (for every two electrons transferred, four hydrogen ions are translocated across the cytoplasmic membrane), and thus conserves the redox energy in a proton gradient. This Chlorobaculum tepidum (strain ATCC 49652 / DSM 12025 / NBRC 103806 / TLS) (Chlorobium tepidum) protein is NADH-quinone oxidoreductase subunit B.